The primary structure comprises 147 residues: Hemoglobin subunit gamma-1 (147 aa).

Residues Asn3–His147 form the Globin domain. Thr13 is modified (phosphothreonine). Phosphoserine is present on residues Ser45, Ser51, and Ser53. N6-acetyllysine is present on Lys60. A heme b-binding site is contributed by His64. An N6-acetyllysine modification is found at Lys83. His93 contributes to the heme b binding site. Position 94 is an S-nitrosocysteine (Cys94). Position 140 is a phosphoserine (Ser140).

It belongs to the globin family. Heterotetramer of two alpha chains and two gamma chains in fetal hemoglobin (Hb F). As to expression, red blood cells.

In terms of biological role, gamma chains make up the fetal hemoglobin F, in combination with alpha chains. The polypeptide is Hemoglobin subunit gamma-1 (HBG1) (Sapajus apella (Brown-capped capuchin)).